A 390-amino-acid polypeptide reads, in one-letter code: 3-ketoacyl-CoA thiolase (390 aa).

Cysteine 95 serves as the catalytic Acyl-thioester intermediate. Residues histidine 346 and cysteine 376 each act as proton acceptor in the active site.

It belongs to the thiolase-like superfamily. Thiolase family. As to quaternary structure, heterotetramer of two alpha chains (FadB) and two beta chains (FadA).

Its subcellular location is the cytoplasm. The enzyme catalyses an acyl-CoA + acetyl-CoA = a 3-oxoacyl-CoA + CoA. It participates in lipid metabolism; fatty acid beta-oxidation. Its function is as follows. Catalyzes the final step of fatty acid oxidation in which acetyl-CoA is released and the CoA ester of a fatty acid two carbons shorter is formed. In Psychrobacter arcticus (strain DSM 17307 / VKM B-2377 / 273-4), this protein is 3-ketoacyl-CoA thiolase.